Here is a 180-residue protein sequence, read N- to C-terminus: MQKIQFILGILAAASSSATLAYDGKITFNGKVVDQTCSVTTESKNLTVKLPTVSANSLASSGKVVGLTPFTILLEGCNTPAVTGAQNVNAYFEPNANTDYTTGNLTNTASSGASNVQIQLLNADGVKAIKLGQAAAAQSVDTVAINDANVTLRYNAQYYATGVATAGDVTSTVNYTIAYQ.

The N-terminal stretch at 1 to 21 is a signal peptide; it reads MQKIQFILGILAAASSSATLA. The cysteines at positions 37 and 77 are disulfide-linked.

This sequence belongs to the fimbrial protein family.

It is found in the fimbrium. In terms of biological role, fimbriae (also called pili), polar filaments radiating from the surface of the bacterium to a length of 0.5-1.5 micrometers and numbering 100-300 per cell, enable bacteria to colonize the epithelium of specific host organs. This is F17 fimbrial protein (F17a-A) from Escherichia coli.